A 217-amino-acid chain; its full sequence is MNQTLLSEYGTSSERVEHAINALRDGKGVMVLDNEDRENEGDIIFAAETMTVEQMALTIRYGSGIVCLCLTEERRQQLQLPMMVENNSSPFQTAFTVTIEAAQGVTTGVSAADRITTIRAAIADNAKPSDLNRPGHVFPLRAQPGGVLVRQGHTEAAIDLVSLAGFKPAGVLCELTNDDGSMARTLEVVQFAKLHNMPVVTIEDLVIYRQAIEQKAS.

D-ribulose 5-phosphate contacts are provided by residues 37-38 (RE), Asp-42, 150-154 (RQGHT), and Glu-174. Mg(2+) is bound at residue Glu-38. His-153 is a Mg(2+) binding site.

This sequence belongs to the DHBP synthase family. In terms of assembly, homodimer. Mg(2+) serves as cofactor. Mn(2+) is required as a cofactor.

It catalyses the reaction D-ribulose 5-phosphate = (2S)-2-hydroxy-3-oxobutyl phosphate + formate + H(+). It functions in the pathway cofactor biosynthesis; riboflavin biosynthesis; 2-hydroxy-3-oxobutyl phosphate from D-ribulose 5-phosphate: step 1/1. In terms of biological role, catalyzes the conversion of D-ribulose 5-phosphate to formate and 3,4-dihydroxy-2-butanone 4-phosphate. The chain is 3,4-dihydroxy-2-butanone 4-phosphate synthase from Photorhabdus laumondii subsp. laumondii (strain DSM 15139 / CIP 105565 / TT01) (Photorhabdus luminescens subsp. laumondii).